Consider the following 554-residue polypeptide: Zinc finger protein syd-9 (554 aa).

3 C2H2-type zinc fingers span residues Leu-20–His-43, Phe-65–His-87, and Tyr-93–His-116. 3 disordered regions span residues Lys-136–Pro-158, Ser-298–Ala-319, and Ala-342–Pro-383. The span at Asn-142–Pro-158 shows a compositional bias: low complexity. 2 stretches are compositionally biased toward polar residues: residues Pro-351–Cys-360 and Ser-370–Ser-379. A C2H2-type 4 zinc finger spans residues Leu-387–His-410. The disordered stretch occupies residues Arg-516 to Leu-554. Over residues Ser-544–Leu-554 the composition is skewed to basic and acidic residues.

In terms of tissue distribution, expressed mainly in body wall muscles and ventral cord motoneurons.

It is found in the nucleus. The protein localises to the nucleus speckle. Plays a role in regulating synaptic function, probably by modulation of endocytosis. May be dispensable in muscle for normal locomotion. May be involved in post-transcriptional mRNA processing, in parallel with unc-75. This Caenorhabditis elegans protein is Zinc finger protein syd-9.